A 675-amino-acid polypeptide reads, in one-letter code: Secretogranin-1 (675 aa).

An N-terminal signal peptide occupies residues 1-20 (MQRAMLLGLLGAAALAAVIS). Cys36 and Cys57 are joined by a disulfide. Over residues 64 to 90 (SGKEVKGEEKGENENSKFEVRLLRDPS) the composition is skewed to basic and acidic residues. 2 disordered regions span residues 64–507 (SGKE…YPTT) and 528–555 (NSDFEKKGNPDDSFLDDDGEDGNGVTMT). Ser93, Ser99, Ser100, Ser129, and Ser147 each carry phosphoserine. Ser93 is a glycosylation site (O-linked (Xyl...) (chondroitin sulfate) serine). 2 stretches are compositionally biased toward basic and acidic residues: residues 148 to 161 (KEAKIRHSEERGGK) and 168 to 248 (GKIY…KPQE). Position 190 is a phosphoserine (Ser190). An O-linked (Xyl...) (chondroitin sulfate) serine glycan is attached at Ser236. The segment covering 250 to 269 (PDQDQSEEESEEGEEGEEGA) has biased composition (acidic residues). Residues Ser255, Ser259, Ser291, Ser309, and Ser333 each carry the phosphoserine modification. Residues 292-311 (YEGRRPLSEERKHAAGESKD) show a composition bias toward basic and acidic residues. Residue Tyr339 is modified to Sulfotyrosine. Composition is skewed to basic and acidic residues over residues 361–410 (GSEE…EGAK) and 429–452 (SRQEKRLLDEGHDPVHESPVDTAK). Ser362, Ser372, Ser375, and Ser397 each carry phosphoserine. A Sulfotyrosine modification is found at Tyr469. Phosphoserine occurs at positions 490, 529, and 540. The residue at position 563 (Tyr563) is a Sulfotyrosine. The disordered stretch occupies residues 620-646 (DFYDSEEQMGPHQEAEDEKDRADQRVL). Sulfotyrosine; partial is present on Tyr622. Ser624 is subject to Phosphoserine. The segment covering 637-646 (EKDRADQRVL) has biased composition (basic and acidic residues). Arg674 bears the Arginine amide; in CCB peptide short form mark.

Belongs to the chromogranin/secretogranin protein family. As to quaternary structure, interacts with ITPR1 in the secretory granules. In terms of processing, extensively processed in glucagonoma tissue by limited proteolysis at conserved basic residues. Alternative processing are seen in different tissues. The proglucagon-converting enzymes present in transformed alpha-cells are likely candidates to be involved in tissue-specific processing. In terms of tissue distribution, expressed in the brain, adrenal medulla and anterior pituitary. In the brain, localized to the hippocampal formation, the endocrine hypothalamus, the olfactory system, and in anatomically distinct structures in the pons-medulla.

It localises to the secreted. In terms of biological role, secretogranin-1 is a neuroendocrine secretory granule protein, which may be the precursor for other biologically active peptides. This is Secretogranin-1 (Chgb) from Rattus norvegicus (Rat).